The primary structure comprises 1242 residues: Myosin-16 (1242 aa).

The region spanning 6-55 (MVDSHVWVEDPERAWIDGVVLNIKGEEAEIKTNDGRDVIANLSRLYPKDT) is the Myosin N-terminal SH3-like domain. One can recognise a Myosin motor domain in the interval 60 to 729 (EGVEDMTRLS…QMAELDAHRT (670 aa)). ATP-binding positions include 154–161 (GESGSGKT) and 207–215 (NNNSSRFGK). Actin-binding stretches follow at residues 493-527 (LIEK…YHTF), 529-552 (DHKR…AGDV), 587-610 (FPPL…KLQL), and 610-632 (LQQL…KPNN). 6 consecutive IQ domains span residues 732–761 (LGES…ASVN), 755–784 (MRRA…EEAA), 780–809 (REEA…SALT), 803–832 (TKSS…TRAA), 828–857 (TTRA…VSLL), and 851–880 (LKRV…ADRK). 2 disordered regions span residues 869-893 (KQLG…ELSN) and 908-1042 (EQSD…ERKT). Residues 876–893 (QADRKEETEKERKVELSN) are compositionally biased toward basic and acidic residues. Tandem repeats lie at residues 876–908 (QADR…LHSE), 909–940 (QSDD…LHSE), 941–965 (QSDD…GHSD), 966–997 (QSDD…MHSD), 998–1029 (QSDD…VHSD), and 1030–1061 (QSDD…TCSE). Positions 876 to 1061 (QADRKEETEK…IQKSFVTCSE (186 aa)) are 6 X 33 AA repeats of Q-S-D-D-x-E-E-x(2)-H-x-R-K-x-K-x(2)-I-x(2)-E-D-G-x(3)-S-x-V-x-H-S-x. Residues 948–966 (GHERKTKLSIESEDGHSDQ) are compositionally biased toward basic and acidic residues. A coiled-coil region spans residues 1079-1142 (DTEIESLTAE…QLQDSLNRLL (64 aa)). Residues 1175 to 1242 (DLADSSENSE…DKEGGFEDYF (68 aa)) are disordered. A compositionally biased stretch (low complexity) spans 1179–1191 (SSENSEASSSDSD). Polar residues predominate over residues 1199–1224 (PSSDNFSTFNPNQLQVIVQDLSTTEA). Residues 1225–1242 (KGTESYDSDKEGGFEDYF) are compositionally biased toward basic and acidic residues.

The protein belongs to the TRAFAC class myosin-kinesin ATPase superfamily. Myosin family. Plant myosin class XI subfamily. Homodimer. As to expression, expressed in flowers and leaves.

The protein localises to the cytoplasm. Its function is as follows. Myosin heavy chain that is required for the cell cycle-regulated transport of various organelles and proteins for their segregation. Functions by binding with its tail domain to receptor proteins on organelles and exerting force with its N-terminal motor domain against actin filaments, thereby transporting its cargo along polarized actin cables. This is Myosin-16 (XI-J) from Arabidopsis thaliana (Mouse-ear cress).